The sequence spans 2640 residues: Collagen alpha-5(VI) chain (2640 aa).

The signal sequence occupies residues 1 to 18 (MKLRLIAFVLILWTETLA). Residues 19-1426 (DQSPGPGPEY…ACCCTFCKCP (1408 aa)) are nonhelical region. 7 VWFA domains span residues 30–209 (DVVF…IKDV), 268–445 (DLIF…LKKI), 474–644 (DIYF…KNEI), 660–829 (DIMF…ESKL), 846–1023 (DIVF…QETL), 1037–1214 (DVIF…VREI), and 1226–1413 (DVVV…LGNI). N-linked (GlcNAc...) asparagine glycans are attached at residues asparagine 201, asparagine 292, and asparagine 614. Collagen-like domains lie at 1426-1478 (PGIP…GCPG), 1474-1524 (VGCP…DPGN), 1557-1614 (GQKG…GPEG), 1632-1689 (GSQG…GIPG), and 1706-1762 (GDPG…AGQP). Residues 1427–1760 (GIPGPHGTRG…GRRGPKGTAG (334 aa)) are triple-helical region. The disordered stretch occupies residues 1435-1761 (RGLQASKGSS…RRGPKGTAGQ (327 aa)). The span at 1452–1464 (HRGEDGDPGRRGE) shows a compositional bias: basic and acidic residues. Basic and acidic residues predominate over residues 1537-1567 (DGEKGFPGDPGDPGKDSNIKGQKGEKGERGR). Residues 1597–1609 (PSGQAGNPGPQGT) show a composition bias toward polar residues. Residues 1610 to 1622 (QGPEGLQGSQGSS) show a composition bias toward low complexity. The Cell attachment site signature appears at 1649-1651 (RGD). Over residues 1718–1727 (GIPGGPGPKG) the composition is skewed to gly residues. Residues 1740 to 1750 (RSGLQGSQGPP) show a composition bias toward low complexity. Residues 1761 to 2640 (QPIYSPCELI…NSKQDGEDAR (880 aa)) form a nonhelical region region. 2 consecutive VWFA domains span residues 1790–1970 (ELVF…KLRR) and 1996–2186 (DVAF…VKFL). Short sequence motifs (cell attachment site) lie at residues 2216-2218 (RGD) and 2259-2261 (RGD). The VWFA 10 domain occupies 2321 to 2516 (DVAFLIDASQ…PDLDYVIKFI (196 aa)). An N-linked (GlcNAc...) asparagine glycan is attached at asparagine 2541. Positions 2617 to 2640 (DKEEPCSAETPAPVNSKQDGEDAR) are disordered.

Belongs to the type VI collagen family. Trimers composed of three different chains: alpha-1(VI), alpha-2(VI), and alpha-3(VI) or alpha-4(VI) or alpha-5(VI) or alpha-6(VI). Post-translationally, prolines at the third position of the tripeptide repeating unit (G-X-Y) are hydroxylated in some or all of the chains. In terms of tissue distribution, in newborn, it is expressed in lung, heart, kidney, muscle, brain, intestine, skin, femur, sternum and calvaria. In adult, it is widely expressed and is detected in lung, heart, kidney, spleen, muscle, ovary, uterus, brain, skin, liver and sternum.

The protein localises to the secreted. It localises to the extracellular space. Its subcellular location is the extracellular matrix. In terms of biological role, collagen VI acts as a cell-binding protein. The polypeptide is Collagen alpha-5(VI) chain (Col6a5) (Mus musculus (Mouse)).